Here is a 90-residue protein sequence, read N- to C-terminus: Small ribosomal subunit protein bS16 (90 aa).

This sequence belongs to the bacterial ribosomal protein bS16 family.

In Brevibacillus brevis (strain 47 / JCM 6285 / NBRC 100599), this protein is Small ribosomal subunit protein bS16.